Consider the following 343-residue polypeptide: Annexin A1 isoform p37 (343 aa).

Gln-19 participates in a covalent cross-link: Isoglutamyl lysine isopeptide (Gln-Lys) (interchain with K-?). Tyr-21 bears the Phosphotyrosine; by EGFR; in vitro mark. Ser-24 carries the phosphoserine; by PKC; in vitro modification. Annexin repeat units lie at residues Phe-38 to Lys-109, Thr-110 to Lys-181, Asp-193 to Lys-265, and Ser-269 to Gly-340.

Belongs to the annexin family. Phosphorylated by protein kinase C and epidermal growth factor receptor/kinase. In terms of processing, the N-terminus is blocked.

It localises to the nucleus. It is found in the cytoplasm. The protein resides in the cell projection. Its subcellular location is the cilium. The protein localises to the basolateral cell membrane. Its function is as follows. Calcium/phospholipid-binding protein which promotes membrane fusion and is involved in exocytosis. This protein regulates phospholipase A2 activity. It seems to bind from two to four calcium ions with high affinity. The protein is Annexin A1 isoform p37 (CP37) of Columba livia (Rock dove).